We begin with the raw amino-acid sequence, 255 residues long: Accessory gland-specific peptide 26Aa (255 aa).

A signal peptide spans 1-18 (MNLILLCSQILLLLFTVA). Residues 86 to 110 (PINNSKSRKNSSTLPSQILTDKPNQ) are disordered. A compositionally biased stretch (polar residues) spans 87-110 (INNSKSRKNSSTLPSQILTDKPNQ). 3 N-linked (GlcNAc...) asparagine glycosylation sites follow: Asn88, Asn95, and Asn136. Disordered regions lie at residues 177–196 (NAQN…SKDI) and 235–255 (NNPA…PSTT). The span at 183–192 (KSTKSCKKRP) shows a compositional bias: basic residues. The span at 245 to 255 (KSPSEGNPSTT) shows a compositional bias: polar residues.

In terms of processing, it undergoes several cleavages as it is secreted and it is further processed in the recipient female. In terms of tissue distribution, main cells of the accessory glands of males.

The protein resides in the secreted. It localises to the extracellular space. This protein is transferred from male to female's hemolymph during mating, affecting egglaying and behavior after mating. The sequence is that of Accessory gland-specific peptide 26Aa (Acp26Aa) from Drosophila sechellia (Fruit fly).